The primary structure comprises 453 residues: Exopolyphosphatase PRUNE1 (453 aa).

Residue Met1 is modified to N-acetylmethionine. Mn(2+) contacts are provided by Asp28, Asp30, Asp106, and Asp179. The short motif at 106 to 108 (DHH) is the DHH motif element. The essential for homodimerization stretch occupies residues 393 to 420 (SLISGLSQDEEDPPLPPTPMNSLVDECP). Residues 395–421 (ISGLSQDEEDPPLPPTPMNSLVDECPL) form a disordered region. Ser399 is subject to Phosphoserine. Phosphothreonine is present on Thr410. Ser414 is modified (phosphoserine).

Belongs to the PPase class C family. Prune subfamily. In terms of assembly, homooligomer. Able to homodimerize via its C-terminal domain. Interacts with NME1. Interacts with GSK3; at focal adhesion complexes where paxillin and vinculin are colocalized. Interacts with alpha and beta tubulin. The cofactor is Mn(2+). Ubiquitously expressed. Seems to be overexpressed in aggressive sarcoma subtypes, such as leiomyosarcomas and malignant fibrous histiocytomas (MFH) as well as in the less malignant liposarcomas.

The protein localises to the cytoplasm. It is found in the nucleus. Its subcellular location is the cell junction. It localises to the focal adhesion. It catalyses the reaction diphosphate + H2O = 2 phosphate + H(+). Its activity is regulated as follows. Activated by magnesium ions and inhibited by manganese ions. Inhibited by dipyridamole, moderately sensitive to IBMX and inhibited by vinpocetine. In terms of biological role, phosphodiesterase (PDE) that has higher activity toward cAMP than cGMP, as substrate. Plays a role in cell proliferation, migration and differentiation, and acts as a negative regulator of NME1. Plays a role in the regulation of neurogenesis. Involved in the regulation of microtubule polymerization. The chain is Exopolyphosphatase PRUNE1 from Homo sapiens (Human).